The following is a 375-amino-acid chain: Succinyl-diaminopimelate desuccinylase (375 aa).

Residue histidine 66 coordinates Zn(2+). Aspartate 68 is a catalytic residue. Aspartate 99 serves as a coordination point for Zn(2+). Residue glutamate 133 is the Proton acceptor of the active site. 3 residues coordinate Zn(2+): glutamate 134, glutamate 162, and histidine 348.

Belongs to the peptidase M20A family. DapE subfamily. In terms of assembly, homodimer. Requires Zn(2+) as cofactor. It depends on Co(2+) as a cofactor.

The enzyme catalyses N-succinyl-(2S,6S)-2,6-diaminopimelate + H2O = (2S,6S)-2,6-diaminopimelate + succinate. It participates in amino-acid biosynthesis; L-lysine biosynthesis via DAP pathway; LL-2,6-diaminopimelate from (S)-tetrahydrodipicolinate (succinylase route): step 3/3. Its function is as follows. Catalyzes the hydrolysis of N-succinyl-L,L-diaminopimelic acid (SDAP), forming succinate and LL-2,6-diaminopimelate (DAP), an intermediate involved in the bacterial biosynthesis of lysine and meso-diaminopimelic acid, an essential component of bacterial cell walls. This is Succinyl-diaminopimelate desuccinylase from Klebsiella pneumoniae (strain 342).